Here is a 411-residue protein sequence, read N- to C-terminus: Carbohydrate sulfotransferase 1 (411 aa).

Residues 1–2 (MQ) are Cytoplasmic-facing. The helical; Signal-anchor for type II membrane protein transmembrane segment at 3–23 (CSWKAVLLLALASIAIQYTAI) threads the bilayer. The Lumenal portion of the chain corresponds to 24–411 (RTFTAKSFHT…VEERDFRPFS (388 aa)). N56 is a glycosylation site (N-linked (GlcNAc...) asparagine). 69–75 (TRSGSSF) serves as a coordination point for 3'-phosphoadenylyl sulfate. N-linked (GlcNAc...) asparagine glycosylation is found at N145 and N189. 234-242 (RDPRGILAS) provides a ligand contact to 3'-phosphoadenylyl sulfate. N334 carries an N-linked (GlcNAc...) asparagine glycan. The short motif at 337 to 339 (RGD) is the Cell attachment site element.

This sequence belongs to the sulfotransferase 1 family. Gal/GlcNAc/GalNAc subfamily. Widely expressed at low level. Expressed in brain and skeletal muscle. Expressed by high endothelial cells (HEVs) and leukocytes.

It localises to the golgi apparatus membrane. The enzyme catalyses 3'-phosphoadenylyl sulfate + keratan = adenosine 3',5'-bisphosphate + keratan 6'-sulfate.. The protein operates within glycan metabolism. Sulfotransferase that utilizes 3'-phospho-5'-adenylyl sulfate (PAPS) as sulfonate donor to catalyze the transfer of sulfate to position 6 of internal galactose (Gal) residues of keratan. Cooperates with B4GALT4 and B3GNT7 glycosyltransferases and CHST6 sulfotransferase to construct and elongate disulfated disaccharide unit [-&gt;3(6-sulfoGalbeta)1-&gt;4(6-sulfoGlcNAcbeta)1-&gt;] within keratan sulfate polymer. Has a preference for sulfating keratan sulfate, but it also transfers sulfate to the unsulfated polymer. Involved in biosynthesis of phosphacan, a major keratan sulfate proteoglycan in the developing brain. Involved in biosynthesis of 6-sulfoGalbeta-containing O-linked glycans in high endothelial venules of lymph nodes. May act in a synergistic manner with CHST4 to generate sialyl 6',6-disulfo Lewis X motif, a recognition determinant for immune cell receptors implicated in leukocyte trafficking. Catalyzes sulfation of N-acetyllactosamine (LacNAc) oligosaccharides with highest efficiency for sialylated LacNAc structures. This is Carbohydrate sulfotransferase 1 from Homo sapiens (Human).